The chain runs to 336 residues: Ribosomal RNA large subunit methyltransferase F (336 aa).

The disordered stretch occupies residues 1-24; sequence MPRPTSPHPDAERKSASPLHPRNR.

Belongs to the methyltransferase superfamily. METTL16/RlmF family.

It localises to the cytoplasm. The catalysed reaction is adenosine(1618) in 23S rRNA + S-adenosyl-L-methionine = N(6)-methyladenosine(1618) in 23S rRNA + S-adenosyl-L-homocysteine + H(+). Its function is as follows. Specifically methylates the adenine in position 1618 of 23S rRNA. The sequence is that of Ribosomal RNA large subunit methyltransferase F from Pseudomonas aeruginosa (strain LESB58).